The sequence spans 474 residues: L-arabinose isomerase (474 aa).

Residues E306, E331, H348, and H447 each coordinate Mn(2+).

The protein belongs to the arabinose isomerase family. The cofactor is Mn(2+).

It carries out the reaction beta-L-arabinopyranose = L-ribulose. It participates in carbohydrate degradation; L-arabinose degradation via L-ribulose; D-xylulose 5-phosphate from L-arabinose (bacterial route): step 1/3. Functionally, catalyzes the conversion of L-arabinose to L-ribulose. This Leuconostoc mesenteroides subsp. mesenteroides (strain ATCC 8293 / DSM 20343 / BCRC 11652 / CCM 1803 / JCM 6124 / NCDO 523 / NBRC 100496 / NCIMB 8023 / NCTC 12954 / NRRL B-1118 / 37Y) protein is L-arabinose isomerase.